The primary structure comprises 289 residues: 4-diphosphocytidyl-2-C-methyl-D-erythritol kinase (289 aa).

Residue lysine 10 is part of the active site. 99–109 (PMGGGLGGGSS) serves as a coordination point for ATP. The active site involves aspartate 141.

Belongs to the GHMP kinase family. IspE subfamily. As to quaternary structure, homodimer.

It carries out the reaction 4-CDP-2-C-methyl-D-erythritol + ATP = 4-CDP-2-C-methyl-D-erythritol 2-phosphate + ADP + H(+). Its pathway is isoprenoid biosynthesis; isopentenyl diphosphate biosynthesis via DXP pathway; isopentenyl diphosphate from 1-deoxy-D-xylulose 5-phosphate: step 3/6. Its function is as follows. Catalyzes the phosphorylation of the position 2 hydroxy group of 4-diphosphocytidyl-2C-methyl-D-erythritol. The protein is 4-diphosphocytidyl-2-C-methyl-D-erythritol kinase of Enterobacter sp. (strain 638).